We begin with the raw amino-acid sequence, 62 residues long: Photosystem II reaction center protein Z (62 aa).

A run of 2 helical transmembrane segments spans residues Ala-8–Ala-28 and Phe-41–Ile-61.

It belongs to the PsbZ family. As to quaternary structure, PSII is composed of 1 copy each of membrane proteins PsbA, PsbB, PsbC, PsbD, PsbE, PsbF, PsbH, PsbI, PsbJ, PsbK, PsbL, PsbM, PsbT, PsbY, PsbZ, Psb30/Ycf12, at least 3 peripheral proteins of the oxygen-evolving complex and a large number of cofactors. It forms dimeric complexes.

The protein localises to the plastid. It localises to the chloroplast thylakoid membrane. Functionally, may control the interaction of photosystem II (PSII) cores with the light-harvesting antenna, regulates electron flow through the 2 photosystem reaction centers. PSII is a light-driven water plastoquinone oxidoreductase, using light energy to abstract electrons from H(2)O, generating a proton gradient subsequently used for ATP formation. The chain is Photosystem II reaction center protein Z from Nicotiana sylvestris (Wood tobacco).